The chain runs to 465 residues: MLPLVALVGRPNVGKSTIFNALTRTRDALVHDQPGVTRDRNYGVCRLDEQQPFIVVDTGGIAGDEEGLAGATARQARAAAGEADLVLFVVDGREGASSLDDEILAWLRKLARPTVLVINKIDGTDEESVRSEFSRYGFSDVVALSAAHRQGIDDLLEEVGARLPEEGAGELLDNDPARVRIAFVGRPNVGKSTLVNRLLGEERMIASEVPGTTRDSIAVDLERDGRQYRLIDTAGLRRRGKVEEAVEKFSAFKTLQAIEQCQVAVLMLDATEGVTDQDATILGAILDAGRALVVAINKWDGQSDYQRAQAEDLLSRKLGFVNWAEAVRISALHGSGMRELFQAIHRAHASATHEFSTSEVNQALEIAYETNPPPSIRGHVSKLRYVHPGGANPPTFIVHGTRLKVLPESYKRYLENFFRKRFKLVGTPVRFIFREGANPYEGKKNPLSDRQIARKRRLMRHVKGK.

2 EngA-type G domains span residues 3–167 (PLVA…PEEG) and 179–352 (VRIA…ASAT). GTP is bound by residues 9–16 (GRPNVGKS), 57–61 (DTGGI), 119–122 (NKID), 185–192 (GRPNVGKS), 232–236 (DTAGL), and 297–300 (NKWD). Positions 353–437 (HEFSTSEVNQ…PVRFIFREGA (85 aa)) constitute a KH-like domain.

This sequence belongs to the TRAFAC class TrmE-Era-EngA-EngB-Septin-like GTPase superfamily. EngA (Der) GTPase family. Associates with the 50S ribosomal subunit.

Functionally, GTPase that plays an essential role in the late steps of ribosome biogenesis. The chain is GTPase Der from Xanthomonas campestris pv. campestris (strain 8004).